The primary structure comprises 410 residues: Putative competence-damage inducible protein (410 aa).

It belongs to the CinA family.

The chain is Putative competence-damage inducible protein from Clostridium kluyveri (strain NBRC 12016).